We begin with the raw amino-acid sequence, 107 residues long: Small ribosomal subunit protein bS18 (107 aa).

The protein belongs to the bacterial ribosomal protein bS18 family. In terms of assembly, part of the 30S ribosomal subunit. Forms a tight heterodimer with protein bS6.

In terms of biological role, binds as a heterodimer with protein bS6 to the central domain of the 16S rRNA, where it helps stabilize the platform of the 30S subunit. This is Small ribosomal subunit protein bS18 from Mycoplasmopsis agalactiae (strain NCTC 10123 / CIP 59.7 / PG2) (Mycoplasma agalactiae).